A 330-amino-acid polypeptide reads, in one-letter code: Aspartate--ammonia ligase (330 aa).

It belongs to the class-II aminoacyl-tRNA synthetase family. AsnA subfamily.

Its subcellular location is the cytoplasm. The catalysed reaction is L-aspartate + NH4(+) + ATP = L-asparagine + AMP + diphosphate + H(+). Its pathway is amino-acid biosynthesis; L-asparagine biosynthesis; L-asparagine from L-aspartate (ammonia route): step 1/1. This is Aspartate--ammonia ligase from Escherichia coli O45:K1 (strain S88 / ExPEC).